Here is a 364-residue protein sequence, read N- to C-terminus: Probable dual-specificity RNA methyltransferase RlmN (364 aa).

E107 acts as the Proton acceptor in catalysis. The region spanning 113–346 (HNYGNSVCVT…VTIRREHGHD (234 aa)) is the Radical SAM core domain. A disulfide bridge links C120 with C351. 3 residues coordinate [4Fe-4S] cluster: C127, C131, and C134. S-adenosyl-L-methionine contacts are provided by residues 177 to 178 (GE), S209, 232 to 234 (SLH), and N308. Residue C351 is the S-methylcysteine intermediate of the active site.

It belongs to the radical SAM superfamily. RlmN family. It depends on [4Fe-4S] cluster as a cofactor.

Its subcellular location is the cytoplasm. The enzyme catalyses adenosine(2503) in 23S rRNA + 2 reduced [2Fe-2S]-[ferredoxin] + 2 S-adenosyl-L-methionine = 2-methyladenosine(2503) in 23S rRNA + 5'-deoxyadenosine + L-methionine + 2 oxidized [2Fe-2S]-[ferredoxin] + S-adenosyl-L-homocysteine. The catalysed reaction is adenosine(37) in tRNA + 2 reduced [2Fe-2S]-[ferredoxin] + 2 S-adenosyl-L-methionine = 2-methyladenosine(37) in tRNA + 5'-deoxyadenosine + L-methionine + 2 oxidized [2Fe-2S]-[ferredoxin] + S-adenosyl-L-homocysteine. In terms of biological role, specifically methylates position 2 of adenine 2503 in 23S rRNA and position 2 of adenine 37 in tRNAs. This chain is Probable dual-specificity RNA methyltransferase RlmN, found in Geobacillus thermodenitrificans (strain NG80-2).